We begin with the raw amino-acid sequence, 85 residues long: Probable small nuclear ribonucleoprotein G (85 aa).

Positions 6–78 (QADPDLTKLL…ILLMEPLESM (73 aa)) constitute a Sm domain.

The protein belongs to the snRNP Sm proteins family. Core component of the spliceosomal U1, U2, U4 and U5 small nuclear ribonucleoproteins (snRNPs), the building blocks of the spliceosome. Most spliceosomal snRNPs contain a common set of Sm proteins, SNRPB, SNRPD1, SNRPD2, SNRPD3, SNRPE, SNRPF and SNRPG that assemble in a heptameric protein ring on the Sm site of the small nuclear RNA to form the core snRNP. Component of the U1 snRNP. Component of the U4/U6-U5 tri-snRNP complex. Component of the U7 snRNP complex. Component of the U11/U12 snRNPs that are part of the U12-type spliceosome.

It is found in the cytoplasm. The protein resides in the cytosol. It localises to the nucleus. Functionally, plays a role in pre-mRNA splicing as a core component of the spliceosomal U1, U2, U4 and U5 small nuclear ribonucleoproteins (snRNPs), the building blocks of the spliceosome. Component of both the pre-catalytic spliceosome B complex and activated spliceosome C complexes. Is also a component of the minor U12 spliceosome. This Dictyostelium discoideum (Social amoeba) protein is Probable small nuclear ribonucleoprotein G (snrpG).